The chain runs to 182 residues: Orotate phosphoribosyltransferase (182 aa).

Residues Arg-93, Lys-94, Lys-97, and Glu-119–Ser-127 contribute to the 5-phospho-alpha-D-ribose 1-diphosphate site. Orotate-binding residues include Thr-123 and Arg-151.

The protein belongs to the purine/pyrimidine phosphoribosyltransferase family. PyrE subfamily. Homodimer. Requires Mg(2+) as cofactor.

The enzyme catalyses orotidine 5'-phosphate + diphosphate = orotate + 5-phospho-alpha-D-ribose 1-diphosphate. Its pathway is pyrimidine metabolism; UMP biosynthesis via de novo pathway; UMP from orotate: step 1/2. Its function is as follows. Catalyzes the transfer of a ribosyl phosphate group from 5-phosphoribose 1-diphosphate to orotate, leading to the formation of orotidine monophosphate (OMP). This is Orotate phosphoribosyltransferase from Haloquadratum walsbyi (strain DSM 16790 / HBSQ001).